The following is a 415-amino-acid chain: MMLGPEGGEGFVVKLRGLPWSCSVEDVQNFLSDCTIHDGAAGVHFIYTREGRQSGEAFVELGSEDDVKMALKKDRESMGHRYIEVFKSHRTEMDWVLKHSGPNSADSANDGFVRLRGLPFGCTKEEIVQFFSGLEIVPNGITLPVDPEGKITGEAFVQFASQELAEKALGKHKERIGHRYIEVFKSSQEEVRSYSDPPLKFMSVQRPGPYDRPGTARRYIGIVKQAGLERMRPSAYSTGYGGYEEYSGLSDGYGFTTDLFGRDLSYCLSGMYDHRYGDSEFTVQSTTGHCVHMRGLPYKATENDIYNFFSPLNPVRVHIEIGPDGRVTGEADVEFATHEEAVAAMSKDRANMQHRYIELFLNSTTGASNGAYSSQVMQGMGVSSAQATYSGLESQSVSGCYGAGYSGQNSMGGYD.

Met1 carries the N-acetylmethionine modification. An N-acetylmethionine; in Heterogeneous nuclear ribonucleoprotein F, N-terminally processed modification is found at Met2. The 73-residue stretch at 13–85 (VKLRGLPWSC…ESMGHRYIEV (73 aa)) folds into the RRM 1 domain. A Glycyl lysine isopeptide (Lys-Gly) (interchain with G-Cter in SUMO) cross-link involves residue Lys72. The interval 81-86 (RYIEVF) is interaction with RNA. Lys87 participates in a covalent cross-link: Glycyl lysine isopeptide (Lys-Gly) (interchain with G-Cter in SUMO2). Phosphoserine is present on residues Ser104, Ser107, and Ser161. Positions 111–188 (GFVRLRGLPF…RYIEVFKSSQ (78 aa)) constitute an RRM 2 domain. Lys167 participates in a covalent cross-link: Glycyl lysine isopeptide (Lys-Gly) (interchain with G-Cter in SUMO2). An interaction with RNA region spans residues 179-184 (RYIEVF). Lys185 is covalently cross-linked (Glycyl lysine isopeptide (Lys-Gly) (interchain with G-Cter in SUMO2)). Ser187, Ser193, and Ser195 each carry phosphoserine. Position 200 is an N6-acetyllysine; alternate (Lys200). Lys200 participates in a covalent cross-link: Glycyl lysine isopeptide (Lys-Gly) (interchain with G-Cter in SUMO2); alternate. Thr215 carries the post-translational modification Phosphothreonine. Lys224 carries the post-translational modification N6-acetyllysine; alternate. A Glycyl lysine isopeptide (Lys-Gly) (interchain with G-Cter in SUMO2); alternate cross-link involves residue Lys224. Ser265 carries the phosphoserine modification. The 78-residue stretch at 289 to 366 (HCVHMRGLPY…IELFLNSTTG (78 aa)) folds into the RRM 3 domain. The tract at residues 355 to 360 (RYIELF) is interaction with RNA.

Identified in the spliceosome C complex. Interacts with AGO1, AGO2, TBP and TXNL4/DIM1. Post-translationally, sumoylated.

The protein localises to the nucleus. It is found in the nucleoplasm. Functionally, component of the heterogeneous nuclear ribonucleoprotein (hnRNP) complexes which provide the substrate for the processing events that pre-mRNAs undergo before becoming functional, translatable mRNAs in the cytoplasm. Plays a role in the regulation of alternative splicing events. Binds G-rich sequences in pre-mRNAs and keeps target RNA in an unfolded state. The sequence is that of Heterogeneous nuclear ribonucleoprotein F (HNRNPF) from Macaca fascicularis (Crab-eating macaque).